Reading from the N-terminus, the 113-residue chain is Iron-sulfur cluster insertion protein ErpA (113 aa).

The iron-sulfur cluster site is built by Cys-41, Cys-105, and Cys-107.

This sequence belongs to the HesB/IscA family. Homodimer. It depends on iron-sulfur cluster as a cofactor.

Required for insertion of 4Fe-4S clusters for at least IspG. This chain is Iron-sulfur cluster insertion protein ErpA, found in Actinobacillus pleuropneumoniae serotype 5b (strain L20).